The chain runs to 122 residues: UPF0102 protein ECH_0093 (122 aa).

This sequence belongs to the UPF0102 family.

This chain is UPF0102 protein ECH_0093, found in Ehrlichia chaffeensis (strain ATCC CRL-10679 / Arkansas).